The chain runs to 289 residues: ATP synthase gamma chain (289 aa).

Belongs to the ATPase gamma chain family. In terms of assembly, F-type ATPases have 2 components, CF(1) - the catalytic core - and CF(0) - the membrane proton channel. CF(1) has five subunits: alpha(3), beta(3), gamma(1), delta(1), epsilon(1). CF(0) has three main subunits: a, b and c.

It localises to the cell membrane. Produces ATP from ADP in the presence of a proton gradient across the membrane. The gamma chain is believed to be important in regulating ATPase activity and the flow of protons through the CF(0) complex. The protein is ATP synthase gamma chain of Lawsonia intracellularis (strain PHE/MN1-00).